An 817-amino-acid polypeptide reads, in one-letter code: Nuclear hormone receptor family member nhr-48 (817 aa).

The disordered stretch occupies residues Tyr-49–Glu-91. The span at Asp-52–Gly-62 shows a compositional bias: acidic residues. Gly residues predominate over residues Ser-63–Lys-72. Residues Asn-97 to Ser-172 constitute a DNA-binding region (nuclear receptor). 2 NR C4-type zinc fingers span residues Cys-100 to Cys-120 and Cys-136 to Cys-155. The span at Ala-202–Tyr-212 shows a compositional bias: acidic residues. 2 disordered regions span residues Ala-202–Gln-221 and Met-258–Leu-284. Residues Leu-273–Leu-284 are compositionally biased toward polar residues.

It belongs to the nuclear hormone receptor family.

Its subcellular location is the nucleus. Functionally, orphan nuclear receptor. The chain is Nuclear hormone receptor family member nhr-48 (nhr-48) from Caenorhabditis elegans.